A 364-amino-acid polypeptide reads, in one-letter code: Dihydroorotate dehydrogenase (quinone) (364 aa).

Residues 61-65 and T85 each bind FMN; that span reads AGYDK. Residue K65 participates in substrate binding. Substrate is bound at residue 110-114; sequence NRLGF. FMN-binding residues include N139 and N170. N170 is a binding site for substrate. S173 functions as the Nucleophile in the catalytic mechanism. N175 is a substrate binding site. FMN contacts are provided by K215 and S243. Residue 244–245 coordinates substrate; it reads NT. FMN is bound by residues G266, G295, and 316–317; that span reads YT.

It belongs to the dihydroorotate dehydrogenase family. Type 2 subfamily. In terms of assembly, monomer. FMN serves as cofactor.

It is found in the cell membrane. It catalyses the reaction (S)-dihydroorotate + a quinone = orotate + a quinol. The protein operates within pyrimidine metabolism; UMP biosynthesis via de novo pathway; orotate from (S)-dihydroorotate (quinone route): step 1/1. Its function is as follows. Catalyzes the conversion of dihydroorotate to orotate with quinone as electron acceptor. The protein is Dihydroorotate dehydrogenase (quinone) of Brucella canis (strain ATCC 23365 / NCTC 10854 / RM-666).